Reading from the N-terminus, the 2083-residue chain is Nonribosomal peptide synthetase sidD (2083 aa).

The adenylation 1 stretch occupies residues 251 to 650 (TYRQIDQYSS…GEIESQLRAR (400 aa)). The region spanning 764-840 (RELSDLERRL…AMASVVRICD (77 aa)) is the Carrier 1 domain. At Ser-801 the chain carries O-(pantetheine 4'-phosphoryl)serine. Residues 876–1146 (EDIYPCTPTQ…IATVPIRVRI (271 aa)) form a condensation 1 region. Residues 1336–1421 (LSPIGCVGEL…TEIERHLAEH (86 aa)) are adenylation 2. One can recognise a Carrier 2 domain in the interval 1557–1633 (NHLSASESIL…DAARVMKVDE (77 aa)). O-(pantetheine 4'-phosphoryl)serine is present on Ser-1594. The interval 1674–1946 (DVLPVTDSQD…YQLTPVRVPF (273 aa)) is condensation 2.

It belongs to the NRP synthetase family.

It functions in the pathway siderophore biosynthesis. Its function is as follows. Nonribosomal peptide synthetase; part of the siderophore biosynthetic pathway. Aspergillus fumigatus produces four types of siderophores, low-molecular-mass iron chelators, including excreted fusarinine C (FsC) and triacetylfusarinine C (TAFC) for iron uptake; and intacellular ferricrocin (FC) for hyphal and hydroxyferricrocin (HFC) for conidial iron distribution and storage. TAFC consists of three N(2)-acetyl-N(5)-anhydromevalonyl-N(5)-hydroxyornithine residues cyclically linked by ester bonds; FC is a cyclic hexapeptide with the structure Gly-Ser-Gly-(N(5)-acetyl-N(5)-hydroxyornithine)x3. The biosynthesis of all four siderophores depends on the hydroxylation of ornithine, catalyzed by the monooxygenase sidA. Subsequently, the pathways for biosynthesis of extra- and intracellular siderophores split. For biosynthesis of extracellular siderophores, the transacylase sidF transfers anhydromevalonyl to N(5)-hydroxyornithine. The required anhydromevalonyl-CoA moiety is derived from mevalonate by CoA ligation and dehydration catalyzed by sidI and sidH respectively. The acetylation of N(5)-hydroxyornithine for FC biosynthesis involves the constitutively expressed sidL. FC is hydroxylated to HFC by an as yet uncharacterized enzyme during conidiation. Assembly of fusarinine C (FsC) and FC is catalyzed by two different nonribosomal peptide synthetases (NRPS), sidD and sidC respectively. Subsequently, sidG catalyzes N2-acetylation of FsC for forming TAFC. Both extra- and intracellular siderophores are crucial for growth during iron limitation and virulence. The chain is Nonribosomal peptide synthetase sidD from Aspergillus fumigatus (strain ATCC MYA-4609 / CBS 101355 / FGSC A1100 / Af293) (Neosartorya fumigata).